Here is a 225-residue protein sequence, read N- to C-terminus: NAD(P)H-quinone oxidoreductase subunit K, chloroplastic (225 aa).

[4Fe-4S] cluster is bound by residues C43, C44, C108, and C139.

Belongs to the complex I 20 kDa subunit family. As to quaternary structure, NDH is composed of at least 16 different subunits, 5 of which are encoded in the nucleus. The cofactor is [4Fe-4S] cluster.

It localises to the plastid. The protein localises to the chloroplast thylakoid membrane. It carries out the reaction a plastoquinone + NADH + (n+1) H(+)(in) = a plastoquinol + NAD(+) + n H(+)(out). It catalyses the reaction a plastoquinone + NADPH + (n+1) H(+)(in) = a plastoquinol + NADP(+) + n H(+)(out). Its function is as follows. NDH shuttles electrons from NAD(P)H:plastoquinone, via FMN and iron-sulfur (Fe-S) centers, to quinones in the photosynthetic chain and possibly in a chloroplast respiratory chain. The immediate electron acceptor for the enzyme in this species is believed to be plastoquinone. Couples the redox reaction to proton translocation, and thus conserves the redox energy in a proton gradient. The chain is NAD(P)H-quinone oxidoreductase subunit K, chloroplastic from Lobularia maritima (Sweet alyssum).